The chain runs to 204 residues: dITP/XTP pyrophosphatase (204 aa).

Serine 8 to lysine 13 is a substrate binding site. The Mg(2+) site is built by glutamate 43 and aspartate 72. Aspartate 72 (proton acceptor) is an active-site residue. Substrate is bound by residues serine 73, phenylalanine 155 to aspartate 158, lysine 180, and histidine 185 to arginine 186.

It belongs to the HAM1 NTPase family. In terms of assembly, homodimer. It depends on Mg(2+) as a cofactor.

It catalyses the reaction XTP + H2O = XMP + diphosphate + H(+). It carries out the reaction dITP + H2O = dIMP + diphosphate + H(+). The enzyme catalyses ITP + H2O = IMP + diphosphate + H(+). Its function is as follows. Pyrophosphatase that catalyzes the hydrolysis of nucleoside triphosphates to their monophosphate derivatives, with a high preference for the non-canonical purine nucleotides XTP (xanthosine triphosphate), dITP (deoxyinosine triphosphate) and ITP. Seems to function as a house-cleaning enzyme that removes non-canonical purine nucleotides from the nucleotide pool, thus preventing their incorporation into DNA/RNA and avoiding chromosomal lesions. This chain is dITP/XTP pyrophosphatase, found in Cutibacterium acnes (strain DSM 16379 / KPA171202) (Propionibacterium acnes).